Here is a 103-residue protein sequence, read N- to C-terminus: Histone H4 (103 aa).

A disordered region spans residues 1 to 32; sequence MNTQSIGAKGKSKAAKGIAKRHRKQSSLSDSI. Over residues 10–25 the composition is skewed to basic residues; sequence GKSKAAKGIAKRHRKQ. Lys-16 is subject to N6-acetyl-N6-methyllysine; alternate. Lys-16 is modified (N6-methyllysine; alternate). Residues 20-24 mediate DNA binding; the sequence is KRHRK. Lys-94 is subject to N6-glutaryllysine.

The protein belongs to the histone H4 family. The nucleosome is a histone octamer containing two molecules each of H2A, H2B, H3 and H4 assembled in one H3-H4 heterotetramer and two H2A-H2B heterodimers. The octamer wraps approximately 147 bp of DNA. In terms of processing, glutarylation at Lys-94 (H4K91glu) destabilizes nucleosomes by promoting dissociation of the H2A-H2B dimers from nucleosomes.

It localises to the nucleus. Its subcellular location is the chromosome. Core component of nucleosome. Nucleosomes wrap and compact DNA into chromatin, limiting DNA accessibility to the cellular machineries which require DNA as a template. Histones thereby play a central role in transcription regulation, DNA repair, DNA replication and chromosomal stability. DNA accessibility is regulated via a complex set of post-translational modifications of histones, also called histone code, and nucleosome remodeling. This Encephalitozoon cuniculi (strain GB-M1) (Microsporidian parasite) protein is Histone H4 (HHF1).